Consider the following 105-residue polypeptide: Phosphoribosyl-AMP cyclohydrolase (105 aa).

D72 lines the Mg(2+) pocket. C73 lines the Zn(2+) pocket. 2 residues coordinate Mg(2+): D74 and D76. 2 residues coordinate Zn(2+): C89 and C96.

Belongs to the PRA-CH family. In terms of assembly, homodimer. Requires Mg(2+) as cofactor. Zn(2+) serves as cofactor.

It is found in the cytoplasm. It carries out the reaction 1-(5-phospho-beta-D-ribosyl)-5'-AMP + H2O = 1-(5-phospho-beta-D-ribosyl)-5-[(5-phospho-beta-D-ribosylamino)methylideneamino]imidazole-4-carboxamide. It functions in the pathway amino-acid biosynthesis; L-histidine biosynthesis; L-histidine from 5-phospho-alpha-D-ribose 1-diphosphate: step 3/9. Catalyzes the hydrolysis of the adenine ring of phosphoribosyl-AMP. In Listeria monocytogenes serotype 4b (strain CLIP80459), this protein is Phosphoribosyl-AMP cyclohydrolase.